The primary structure comprises 140 residues: Putative nickel-responsive regulator 2 (140 aa).

Ni(2+) is bound by residues His81, His92, His94, and Cys100.

Belongs to the transcriptional regulatory CopG/NikR family. Ni(2+) serves as cofactor.

Transcriptional regulator. This is Putative nickel-responsive regulator 2 from Methanosarcina acetivorans (strain ATCC 35395 / DSM 2834 / JCM 12185 / C2A).